Reading from the N-terminus, the 74-residue chain is Omega-filistatoxin-Kh1a (74 aa).

Contains 6 disulfide bonds. As to expression, expressed by the venom gland.

It is found in the secreted. Its function is as follows. Potently blocks vertebrate calcium channels Cav1 and Cav2. Is the most active on Cav2.2/CACNA1B (from HEK) (IC(50)=2.3 nM), followed by Cav2.1/CACNA1A (IC(50)=4.3 nM), Cav2.2/CACNA1B (from oocyte) (IC(50)=14.4 nM), Cav1.2/CACNA1C (IC(50)=26.8 nM), and Cav2.3/CACNA1E (IC(50)=96.4 nM). The protein is Omega-filistatoxin-Kh1a of Kukulcania hibernalis (Southern house spider).